We begin with the raw amino-acid sequence, 352 residues long: tRNA pseudouridine synthase D (352 aa).

The active-site Nucleophile is Asp81. One can recognise a TRUD domain in the interval 157–303; it reads GVPNYFGTQR…MDHERRILRL (147 aa).

It belongs to the pseudouridine synthase TruD family.

The catalysed reaction is uridine(13) in tRNA = pseudouridine(13) in tRNA. Functionally, responsible for synthesis of pseudouridine from uracil-13 in transfer RNAs. In Pseudomonas putida (strain ATCC 47054 / DSM 6125 / CFBP 8728 / NCIMB 11950 / KT2440), this protein is tRNA pseudouridine synthase D.